The sequence spans 81 residues: Sulfur carrier protein TusA (81 aa).

The Cysteine persulfide intermediate role is filled by Cys19.

It belongs to the sulfur carrier protein TusA family.

The protein resides in the cytoplasm. Sulfur carrier protein which probably makes part of a sulfur-relay system. This is Sulfur carrier protein TusA from Shewanella baltica (strain OS185).